Reading from the N-terminus, the 389-residue chain is Putative teichuronic acid biosynthesis glycosyltransferase TuaC (389 aa).

It belongs to the glycosyltransferase group 1 family. Glycosyltransferase 4 subfamily.

It functions in the pathway cell wall biogenesis; teichuronic acid biosynthesis. This is Putative teichuronic acid biosynthesis glycosyltransferase TuaC (tuaC) from Bacillus subtilis (strain 168).